We begin with the raw amino-acid sequence, 291 residues long: MEPLRKPLVPVKGIPLIKYFAETMEQLQNFTAWPDDVLISTYPKSGTNWMSEIMDMIYQGGKLDKCGRAPVYARIPFLEFSCPGVPPGLETLKETPAPRIIKTHLPLSLLPQSLLDQKIKVIYVARNAKDVVVSYYNFYKMAKLHPDPGTWESFLENFMDGKVSYGSWYQHVKEWWELRRTHPVLYLFYEDMKENPKREIKKILEFLGRSLPEETVDLIVHHTSFKKMKENPMANYTTIPTEVMDHTIYPFMRKGTIGDWKNTFTVAQSEHFDAHYAKLMTGCDFTFRCQI.

K44–W49 contacts 3'-phosphoadenylyl sulfate. Position 102 to 104 (K102 to H104) interacts with substrate. Catalysis depends on H104, which acts as the Proton acceptor. 3'-phosphoadenylyl sulfate-binding positions include R126, S134, Y189, T223–M228, and F251–G255. S134 is modified (phosphoserine).

It belongs to the sulfotransferase 1 family. In terms of assembly, homodimer. As to expression, expressed in brain, colon, liver, and small intestine of mice colonized with B.ovatus and L.plantarum.

Its subcellular location is the cytoplasm. The catalysed reaction is a phenol + 3'-phosphoadenylyl sulfate = an aryl sulfate + adenosine 3',5'-bisphosphate + H(+). It catalyses the reaction 17beta-estradiol + 3'-phosphoadenylyl sulfate = 17beta-estradiol 3-sulfate + adenosine 3',5'-bisphosphate + H(+). The enzyme catalyses 4-ethylphenol + 3'-phosphoadenylyl sulfate = 4-ethylphenyl sulfate + adenosine 3',5'-bisphosphate + H(+). It carries out the reaction 4-nitrophenol + 3'-phosphoadenylyl sulfate = 4-nitrophenyl sulfate + adenosine 3',5'-bisphosphate. The catalysed reaction is dopamine + 3'-phosphoadenylyl sulfate = dopamine 3-O-sulfate + adenosine 3',5'-bisphosphate + H(+). It catalyses the reaction dopamine + 3'-phosphoadenylyl sulfate = dopamine 4-O-sulfate + adenosine 3',5'-bisphosphate + H(+). The enzyme catalyses 3,3',5-triiodo-L-thyronine + 3'-phosphoadenylyl sulfate = 3,3',5-triiodo-L-thyronine sulfate + adenosine 3',5'-bisphosphate + H(+). It carries out the reaction 3,3',5'-triiodo-L-thyronine + 3'-phosphoadenylyl sulfate = 3,3',5'-triiodo-L-thyronine sulfate + adenosine 3',5'-bisphosphate + H(+). The catalysed reaction is 3,3'-diiodo-L-thyronine + 3'-phosphoadenylyl sulfate = 3,3'-diiodo-L-thyronine sulfate + adenosine 3',5'-bisphosphate + H(+). It catalyses the reaction L-thyroxine + 3'-phosphoadenylyl sulfate = L-thyroxine sulfate + adenosine 3',5'-bisphosphate + H(+). Sulfotransferase that utilizes 3'-phospho-5'-adenylyl sulfate (PAPS) as sulfonate donor to catalyze the sulfate conjugation of a wide variety of acceptor molecules bearing a hydroxyl or an amine group. Sulfonation increases the water solubility of most compounds, and therefore their renal excretion, but it can also result in bioactivation to form active metabolites. Displays broad substrate specificity for small phenolic compounds. Plays an important role in the sulfonation of endogenous molecules such as steroid hormones. Mediates also the metabolic activation of carcinogenic N-hydroxyarylamines leading to highly reactive intermediates capable of forming DNA adducts, potentially resulting in mutagenesis. May play a role in gut microbiota-host metabolic interaction. O-sulfonates 4-ethylphenol (4-EP), a dietary tyrosine-derived metabolite produced by gut bacteria. The product 4-EPS crosses the blood-brain barrier and may negatively regulate oligodendrocyte maturation and myelination, affecting the functional connectivity of different brain regions associated with the limbic system. Catalyzes the sulfate conjugation of dopamine. Catalyzes the sulfation of T4 (L-thyroxine/3,5,3',5'-tetraiodothyronine), T3 (3,5,3'-triiodothyronine), rT3 (3,3',5'-triiodothyronine) and 3,3'-T2 (3,3'-diiodothyronine), with a substrate preference of 3,3'-T2 &gt; rT3 &gt; T3 &gt; T4. The polypeptide is Sulfotransferase 1A1 (Sult1a1) (Mus musculus (Mouse)).